The following is a 206-amino-acid chain: KH domain-containing protein 3 (206 aa).

Positions 1–40 are involved in RNA binding; sequence MDTPRRFPTLVQLMQPKAMPVEVLGHLPKRFSWFHSEFLK. The KH; atypical domain occupies 40-103; sequence KNPKVVRLEV…SYQEDTIKMI (64 aa). Residues 144 to 153 show a composition bias toward basic and acidic residues; the sequence is GTQRSVEVRE. Positions 144 to 206 are disordered; that stretch reads GTQRSVEVRE…EDTRAPVTRL (63 aa). Residue Thr145 is modified to Phosphothreonine. The segment covering 166 to 183 has biased composition (polar residues); it reads TGTQQSLEAANQSGTQRS. Phosphoserine is present on Ser171.

Belongs to the KHDC1 family. As to quaternary structure, component of the subcortical maternal complex (SCMC), at least composed of NLRP5, KHDC3L, OOEP, and TLE6. Within the complex, interacts with NLRP5, KHDC3L and TLE6. The SCMC may facilitate translocation of its components between the nuclear and cytoplasmic compartments. Forms a scaffold complex with OOEP/FLOPED, and interacts with BLM and TRIM25 at DNA replication forks. Interacts with PARP1; the interaction is increased following the formation of DNA double-strand breaks. Interacts with NUMA1.

It is found in the cytoplasm. Its subcellular location is the cell cortex. It localises to the nucleus. The protein resides in the mitochondrion. The protein localises to the cytoskeleton. It is found in the microtubule organizing center. Its subcellular location is the centrosome. It localises to the chromosome. In terms of biological role, component of the subcortical maternal complex (SCMC), a multiprotein complex that plays a key role in early embryonic development. The SCMC complex is a structural constituent of cytoplasmic lattices, which consist in fibrous structures found in the cytoplasm of oocytes and preimplantation embryos. They are required to store maternal proteins critical for embryonic development, such as proteins that control epigenetic reprogramming of the preimplantation embryo, and prevent their degradation or activation. KHDC3 ensures proper spindle assembly by regulating the localization of AURKA via RHOA signaling and of PLK1 via a RHOA-independent process. Required for the localization of MAD2L1 to kinetochores to enable spindle assembly checkpoint function. As part of the OOEP-KHDC3 scaffold, recruits BLM and TRIM25 to DNA replication forks, thereby promoting the ubiquitination of BLM by TRIM25, enhancing BLM retainment at replication forks and therefore promoting stalled replication fork restart. Regulates homologous recombination-mediated DNA repair via recruitment of RAD51 to sites of DNA double-strand breaks, and sustainment of PARP1 activity, which in turn modulates downstream ATM or ATR activation. Activation of ATM or ATR in response to DNA double-strand breaks may be cell-type specific. Its role in DNA double-strand break repair is independent of its role in restarting stalled replication forks. Promotes neural stem cell neurogenesis and neuronal differentiation in the hippocampus. May regulate normal development of learning, memory and anxiety. Capable of binding RNA. This chain is KH domain-containing protein 3 (KHDC3L), found in Macaca mulatta (Rhesus macaque).